Reading from the N-terminus, the 81-residue chain is Lantipeptide prochlorosin 1.1 (81 aa).

A propeptide spanning residues 1–65 is cleaved from the precursor; it reads MSEEQLKAFI…DDDLEGVAGG (65 aa). A cross-link (beta-methyllanthionine (Cys-Thr)) is located at residues 68–72; sequence CVQGT. The beta-methyllanthionine (Thr-Cys) cross-link spans 77-81; the sequence is TINVC.

In terms of processing, cross-links are proved in vitro, when coepressed in E.coli with the ProcM lanthionine synthetase. Post-translationally, the beta-methyllanthionine residues have a DL configuration (with 2S,3S,6R stereochemistry). Maturation of prochlorosin involves the enzymatic conversion of Thr, and Ser into dehydrated AA and the formation of thioether bonds with cysteines. This is followed by membrane translocation and cleavage of the modified precursor.

It localises to the secreted. Lanthionine-containing peptide (lantipeptide) with unknown function. Does not show antibiotic activity against Lactococcus lactis 117 and Bacillus subtilis 6633 bacteria. Organisms that produce this peptide live in oligotrophic environments at very dilute concentrations, suggesting this peptide is not secreted to influence other bacteria. This Prochlorococcus marinus (strain MIT 9313) protein is Lantipeptide prochlorosin 1.1.